The following is a 681-amino-acid chain: Pumilio domain-containing protein C6G9.14 (681 aa).

2 disordered regions span residues 180–210 and 273–322; these read RPGLSSYTPGPSTSRRSISSSSNLGGNPGLI and ASTA…NVPS. Composition is skewed to low complexity over residues 187 to 210 and 273 to 286; these read TPGPSTSRRSISSSSNLGGNPGLI and ASTASTGSTDSSGS. One can recognise a PUM-HD domain in the interval 319 to 659; it reads NVPSLISDDP…RILSKLERRH (341 aa). Pumilio repeat units follow at residues 342-378, 379-414, 415-451, 452-487, 488-523, 524-559, 560-595, and 596-633; these read SLQNSNILSFCKDQHGCRYLQRLLEKKNQSHIDAVFA, ETHPYLAVLMVDAFGNYLCQKLFEHASEAQRSTFIQ, IIAPKLVPISFNMHGTRALQKIIDLVSSPDQISCIVN, ALRPNVVLLTKDLNGNHVIQKCLNKFSQEDCQFIFD, AICEDPLDVSTHRHGCCVVQRCFDHASPAQIEQLVE, HIVPHALTLVQDAFGNYVLQYVLELNNPNHTEAIIS, YFLYKVRALSTQKFSSNVMEKCIFFAPAAIKEKLIS, and ELMDEKHLPKLLRDSFANYVIQTALDNASVKQRAELVE. Residues 656–666 are compositionally biased toward basic and acidic residues; sequence ERRHPSSKEKP. The segment at 656 to 681 is disordered; that stretch reads ERRHPSSKEKPIVYSNSERVNTSSSA. The segment covering 669 to 681 has biased composition (polar residues); the sequence is YSNSERVNTSSSA.

The polypeptide is Pumilio domain-containing protein C6G9.14 (Schizosaccharomyces pombe (strain 972 / ATCC 24843) (Fission yeast)).